We begin with the raw amino-acid sequence, 93 residues long: Cell division protein CrgA (93 aa).

The next 2 membrane-spanning stretches (helical) occupy residues 31-51 (VWFV…LMVF) and 70-90 (LGPW…LLTM).

The protein belongs to the CrgA family.

The protein resides in the cell membrane. Functionally, involved in cell division. This chain is Cell division protein CrgA, found in Mycobacterium bovis (strain ATCC BAA-935 / AF2122/97).